The sequence spans 292 residues: NAD kinase (292 aa).

Asp-73 functions as the Proton acceptor in the catalytic mechanism. NAD(+)-binding positions include 73 to 74 (DG), 147 to 148 (NE), His-158, Arg-175, Asp-177, 188 to 193 (TAYSLS), and Gln-247.

The protein belongs to the NAD kinase family. Requires a divalent metal cation as cofactor.

The protein resides in the cytoplasm. The enzyme catalyses NAD(+) + ATP = ADP + NADP(+) + H(+). In terms of biological role, involved in the regulation of the intracellular balance of NAD and NADP, and is a key enzyme in the biosynthesis of NADP. Catalyzes specifically the phosphorylation on 2'-hydroxyl of the adenosine moiety of NAD to yield NADP. This is NAD kinase from Enterobacter sp. (strain 638).